The chain runs to 425 residues: Serine--tRNA ligase (425 aa).

L-serine is bound at residue 233 to 235; that stretch reads TAE. Position 264-266 (264-266) interacts with ATP; the sequence is RAE. L-serine is bound at residue glutamate 287. Position 351-354 (351-354) interacts with ATP; it reads EISS. Serine 387 is an L-serine binding site.

This sequence belongs to the class-II aminoacyl-tRNA synthetase family. Type-1 seryl-tRNA synthetase subfamily. In terms of assembly, homodimer. The tRNA molecule binds across the dimer.

The protein resides in the cytoplasm. The enzyme catalyses tRNA(Ser) + L-serine + ATP = L-seryl-tRNA(Ser) + AMP + diphosphate + H(+). It carries out the reaction tRNA(Sec) + L-serine + ATP = L-seryl-tRNA(Sec) + AMP + diphosphate + H(+). It functions in the pathway aminoacyl-tRNA biosynthesis; selenocysteinyl-tRNA(Sec) biosynthesis; L-seryl-tRNA(Sec) from L-serine and tRNA(Sec): step 1/1. Its function is as follows. Catalyzes the attachment of serine to tRNA(Ser). Is also able to aminoacylate tRNA(Sec) with serine, to form the misacylated tRNA L-seryl-tRNA(Sec), which will be further converted into selenocysteinyl-tRNA(Sec). The chain is Serine--tRNA ligase from Clostridium botulinum (strain Eklund 17B / Type B).